The following is a 400-amino-acid chain: Enoyl-[acyl-carrier-protein] reductase [NADH] 2 (400 aa).

Residues 48-53 (GASSGF), 75-76 (FE), 112-113 (DA), and 141-142 (LA) each bind NAD(+). Tyr228 contacts substrate. Tyr238 functions as the Proton donor in the catalytic mechanism. NAD(+)-binding positions include Lys247 and 276–278 (LVT).

This sequence belongs to the TER reductase family. As to quaternary structure, monomer.

The enzyme catalyses a 2,3-saturated acyl-[ACP] + NAD(+) = a (2E)-enoyl-[ACP] + NADH + H(+). It functions in the pathway lipid metabolism; fatty acid biosynthesis. Involved in the final reduction of the elongation cycle of fatty acid synthesis (FAS II). Catalyzes the reduction of a carbon-carbon double bond in an enoyl moiety that is covalently linked to an acyl carrier protein (ACP). In Vibrio vulnificus (strain YJ016), this protein is Enoyl-[acyl-carrier-protein] reductase [NADH] 2.